A 297-amino-acid chain; its full sequence is SWIRM domain-containing protein laf1 (297 aa).

2 disordered regions span residues Pro50–Ala70 and Ser109–Ser173. The segment covering Gln159–Ser173 has biased composition (polar residues). An SWIRM domain is found at Leu207–Asp297.

Component of the RPD3C(L) complex.

The protein localises to the nucleus. In terms of biological role, component of the RPD3C(L) histone deacetylase complex (HDAC) responsible for the deacetylation of lysine residues on the N-terminal part of the core histones (H2A, H2B, H3 and H4). Histone deacetylation gives a tag for epigenetic repression and plays an important role in transcriptional regulation, cell cycle progression and developmental events. The protein is SWIRM domain-containing protein laf1 (laf1) of Schizosaccharomyces pombe (strain 972 / ATCC 24843) (Fission yeast).